A 330-amino-acid polypeptide reads, in one-letter code: Induced myeloid leukemia cell differentiation protein Mcl-1 homolog (330 aa).

A PEST-like region spans residues 85-155; that stretch reads LAVPPEEMAA…PPEEEDDELY (71 aa). Ser-101 is modified (phosphoserine). Residue Lys-116 forms a Glycyl lysine isopeptide (Lys-Gly) (interchain with G-Cter in ubiquitin) linkage. Residues 129–153 are disordered; that stretch reads EAAKSSGADGSLPSTPPPPEEEDDE. Ser-139 is subject to Phosphoserine; by GSK3-alpha and GSK3-beta. Ser-142 bears the Phosphoserine mark. At Thr-143 the chain carries Phosphothreonine; by MAPK. Glycyl lysine isopeptide (Lys-Gly) (interchain with G-Cter in ubiquitin) cross-links involve residues Lys-174 and Lys-177. The BH3 motif lies at 189-203; the sequence is ALETLRRVGDGVQRN. Residues 232–252 carry the BH1 motif; the sequence is HVFKDGVTNWGRIVTLISFGA. Positions 284–299 match the BH2 motif; that stretch reads DWLVKQRGWDGFVEFF. Residues 307–329 form a helical membrane-spanning segment; sequence GIRNVLLAFAGVAGVGAGLAYLI.

This sequence belongs to the Bcl-2 family. As to quaternary structure, interacts with HIF3A (via C-terminus domain). Interacts with BOK, BIK, BAX, BAK1, and TPT1. Interacts with unphosphorylated BAD. Interacts with BMF, BBC3 and PMAIP1. Interacts with BOP. Interacts with BCL2L11; may sequester BCL2L11 to prevent its pro-apoptotic activity. Interacts with GIMAP5 and HSPA8/HSC70; the interaction between HSPA8 and MCL1 is impaired in the absence of GIMAP5. In terms of processing, cleaved by CASP3 during apoptosis, yielding a pro-apoptotic C-terminal fragment. Post-translationally, rapidly degraded in the absence of phosphorylation in the PEST region. Phosphorylated on Ser-139, by GSK3, in response to IL3/interleukin-3 withdrawal. Phosphorylation at Ser-139 induces ubiquitination and proteasomal degradation, abrogating the anti-apoptotic activity. Treatment with taxol or okadaic acid induces phosphorylation on additional sites. In terms of processing, ubiquitinated. Ubiquitination is induced by phosphorylation at Ser-139. Deubiquitinated by USP20; leading to increased stability. In terms of tissue distribution, ubiquitous. Highly expressed in heart, spleen, lung, liver, skeletal muscle and kidney. Detected at lower levels in brain, ovary, oviduct and testis.

It localises to the membrane. It is found in the cytoplasm. The protein resides in the mitochondrion. Its subcellular location is the nucleus. The protein localises to the nucleoplasm. Functionally, involved in the regulation of apoptosis versus cell survival, and in the maintenance of viability but not of proliferation. Mediates its effects by interactions with a number of other regulators of apoptosis. This Rattus norvegicus (Rat) protein is Induced myeloid leukemia cell differentiation protein Mcl-1 homolog (Mcl1).